The chain runs to 330 residues: Transcription factor TGA6 (330 aa).

The span at 1–13 (MADTSSRTDVSTD) shows a compositional bias: polar residues. The disordered stretch occupies residues 1-45 (MADTSSRTDVSTDGDTDHRDLGSDRGHMHAAASDSSDRSKDKLDQ). Composition is skewed to basic and acidic residues over residues 15-27 (DTDH…DRGH) and 35-45 (SSDRSKDKLDQ). Residues 44–107 (DQKTLRRLAQ…SSGDQAHSTG (64 aa)) enclose the bZIP domain. Coiled-coil stretches lie at residues 45–142 (QKTL…HAGD) and 217–233 (INSL…ALSQ). Residues 46-66 (KTLRRLAQNREAARKSRLRKK) form a basic motif region. The interval 72–86 (LENSRLKLTQLEQEL) is leucine-zipper. In terms of domain architecture, DOG1 spans 111-327 (ALAFDAEHSR…RALSSLWLAR (217 aa)).

This sequence belongs to the bZIP family. Binds DNA as a dimer. Interacts with NPR1, NPR3 and NPR4. Interacts with GRXC9/GRX480. Expressed predominantly in roots and flowers.

It is found in the nucleus. Its function is as follows. Transcriptional activator that binds specifically to the DNA sequence 5'-TGACG-3'. Recognizes ocs elements like the as-1 motif of the cauliflower mosaic virus 35S promoter. Binding to the as-1-like cis elements mediate auxin- and salicylic acid-inducible transcription. May be involved in the induction of the systemic acquired resistance (SAR) via its interaction with NPR1. Could also bind to the Hex-motif (5'-TGACGTGG-3') another cis-acting element found in plant histone promoters. This is Transcription factor TGA6 (TGA6) from Arabidopsis thaliana (Mouse-ear cress).